Reading from the N-terminus, the 293-residue chain is Phosphatidate cytidylyltransferase (293 aa).

8 consecutive transmembrane segments (helical) span residues isoleucine 6 to tyrosine 26, isoleucine 51 to valine 71, proline 73 to phenylalanine 93, methionine 97 to proline 117, leucine 157 to methionine 177, valine 195 to tyrosine 215, tryptophan 218 to leucine 238, and valine 273 to leucine 293.

Belongs to the CDS family.

It is found in the cell membrane. It carries out the reaction a 1,2-diacyl-sn-glycero-3-phosphate + CTP + H(+) = a CDP-1,2-diacyl-sn-glycerol + diphosphate. The protein operates within phospholipid metabolism; CDP-diacylglycerol biosynthesis; CDP-diacylglycerol from sn-glycerol 3-phosphate: step 3/3. This Synechocystis sp. (strain ATCC 27184 / PCC 6803 / Kazusa) protein is Phosphatidate cytidylyltransferase (cdsA).